Consider the following 350-residue polypeptide: Protein-glutamate methylesterase/protein-glutamine glutaminase (350 aa).

Residues 5–122 (KVLCVDDSAL…RDGLIEYSEV (118 aa)) enclose the Response regulatory domain. The residue at position 56 (Asp-56) is a 4-aspartylphosphate. One can recognise a CheB-type methylesterase domain in the interval 152-346 (PFASSEKLVI…ERILTRLGDR (195 aa)). Catalysis depends on residues Ser-165, His-191, and Asp-288.

Belongs to the CheB family. Phosphorylated by CheA. Phosphorylation of the N-terminal regulatory domain activates the methylesterase activity.

It localises to the cytoplasm. It carries out the reaction [protein]-L-glutamate 5-O-methyl ester + H2O = L-glutamyl-[protein] + methanol + H(+). It catalyses the reaction L-glutaminyl-[protein] + H2O = L-glutamyl-[protein] + NH4(+). In terms of biological role, involved in chemotaxis. Part of a chemotaxis signal transduction system that modulates chemotaxis in response to various stimuli. Catalyzes the demethylation of specific methylglutamate residues introduced into the chemoreceptors (methyl-accepting chemotaxis proteins or MCP) by CheR. Also mediates the irreversible deamidation of specific glutamine residues to glutamic acid. The chain is Protein-glutamate methylesterase/protein-glutamine glutaminase from Bordetella parapertussis (strain 12822 / ATCC BAA-587 / NCTC 13253).